Reading from the N-terminus, the 346-residue chain is NADPH dehydrogenase (346 aa).

23-26 (SPMC) contacts FMN. Tyr-28 contributes to the substrate binding site. 2 residues coordinate FMN: Ala-60 and Gln-102. Substrate is bound at residue 164–167 (HGAH). Residues Arg-215 and 307 to 308 (GR) contribute to the FMN site.

The protein belongs to the NADH:flavin oxidoreductase/NADH oxidase family. NamA subfamily. In terms of assembly, homotetramer. It depends on FMN as a cofactor.

The enzyme catalyses A + NADPH + H(+) = AH2 + NADP(+). Its function is as follows. Catalyzes the reduction of the double bond of an array of alpha,beta-unsaturated aldehydes and ketones. It also reduces the nitro group of nitroester and nitroaromatic compounds. It could have a role in detoxification processes. The protein is NADPH dehydrogenase of Bacillus cytotoxicus (strain DSM 22905 / CIP 110041 / 391-98 / NVH 391-98).